The primary structure comprises 218 residues: Large ribosomal subunit protein uL3 (218 aa).

The disordered stretch occupies residues 137 to 157 (GVGASHGAHKNHRKPGSIGGA).

It belongs to the universal ribosomal protein uL3 family. As to quaternary structure, part of the 50S ribosomal subunit. Forms a cluster with proteins L14 and L19.

Its function is as follows. One of the primary rRNA binding proteins, it binds directly near the 3'-end of the 23S rRNA, where it nucleates assembly of the 50S subunit. This is Large ribosomal subunit protein uL3 from Kocuria rhizophila (strain ATCC 9341 / DSM 348 / NBRC 103217 / DC2201).